The following is a 440-amino-acid chain: UPF0489 protein C5orf22 homolog (440 aa).

The interval valine 187 to methionine 207 is disordered. Over residues glutamate 188–glutamate 200 the composition is skewed to low complexity.

Belongs to the UPF0489 family.

The protein is UPF0489 protein C5orf22 homolog of Xenopus tropicalis (Western clawed frog).